Consider the following 156-residue polypeptide: Arginine repressor (156 aa).

It belongs to the ArgR family.

Its subcellular location is the cytoplasm. The protein operates within amino-acid biosynthesis; L-arginine biosynthesis [regulation]. Its function is as follows. Regulates arginine biosynthesis genes. The protein is Arginine repressor of Escherichia fergusonii (strain ATCC 35469 / DSM 13698 / CCUG 18766 / IAM 14443 / JCM 21226 / LMG 7866 / NBRC 102419 / NCTC 12128 / CDC 0568-73).